The chain runs to 548 residues: Non-structural protein NS1 (548 aa).

This sequence belongs to the orbivirus non-structural protein NS1 family.

This Camelus dromedarius (Dromedary) protein is Non-structural protein NS1 (Segment-5).